The chain runs to 158 residues: Large ribosomal subunit protein eL24 (158 aa).

Over residues 98 to 146 (LDASHKKAEAEKAVRELKQKKANDIEKKRADRKLQGKDVKAAKKAETKK) the composition is skewed to basic and acidic residues. Residues 98-158 (LDASHKKAEA…QPVGAKGGKK (61 aa)) form a disordered region.

The protein belongs to the eukaryotic ribosomal protein eL24 family.

In Tetrahymena thermophila (strain SB210), this protein is Large ribosomal subunit protein eL24 (RPL24).